The primary structure comprises 519 residues: MANLGSEAEREPLLGPGSPGSREWSEIETQEHYKSRWKSVRILYLTMFLSSVGFSIVIMSIWPYLQKIDQTADASFLGWVIASYSLGQMVASPLFGLWSNYRPRKEPLIVSISISVAANCLYAYVHVPAAHNKYYMLIARGLVGFGAGNVAVVRSYIAGATSLQERTNAMANTSTCQALGFILGPVFQTCFALIGEKGVTWDIIKLQVNMYTAPVLLAAFLGILNIILILFILREHRVDDLGRQCKSVNFQEENTDEPQIPEGSIDQVAVVATNIVFFVVLFIFAVYETILTPLTLDMYAWTQEQAVLYDGILLVAFGVEAVLVFMGVKLLSKKIGERAILLGGFVVVWVGFFILLPWGNQFPKIQWEDLHNSSTPNTTFGEIIIGLWNSSREDHSEQPTGCPIEQTWCLYTPVIHLAQFLTAAVLIGTGYPACSVMSYTLYSKVLGPKPQGIYMGWLTTSGSAARILGPVFISHVYTYLGPRWAFSLVCGIVVLTILLIGAVYKRLVAFSVRYMRIQE.

Residues 1–25 (MANLGSEAEREPLLGPGSPGSREWS) are disordered. Over 1-41 (MANLGSEAEREPLLGPGSPGSREWSEIETQEHYKSRWKSVR) the chain is Cytoplasmic. Positions 13-14 (LL) match the Dileucine internalization motif motif. A helical transmembrane segment spans residues 42 to 62 (ILYLTMFLSSVGFSIVIMSIW). Topologically, residues 63–75 (PYLQKIDQTADAS) are extracellular. Residues 76–96 (FLGWVIASYSLGQMVASPLFG) traverse the membrane as a helical segment. Topologically, residues 97–106 (LWSNYRPRKE) are cytoplasmic. A helical transmembrane segment spans residues 107–127 (PLIVSISISVAANCLYAYVHV). Residues 128–140 (PAAHNKYYMLIAR) are Extracellular-facing. The helical transmembrane segment at 141–161 (GLVGFGAGNVAVVRSYIAGAT) threads the bilayer. Residues 162–174 (SLQERTNAMANTS) lie on the Cytoplasmic side of the membrane. The helical transmembrane segment at 175–195 (TCQALGFILGPVFQTCFALIG) threads the bilayer. Topologically, residues 196–212 (EKGVTWDIIKLQVNMYT) are extracellular. A helical transmembrane segment spans residues 213–233 (APVLLAAFLGILNIILILFIL). Residues 234 to 267 (REHRVDDLGRQCKSVNFQEENTDEPQIPEGSIDQ) lie on the Cytoplasmic side of the membrane. A helical transmembrane segment spans residues 268-288 (VAVVATNIVFFVVLFIFAVYE). Over 289–310 (TILTPLTLDMYAWTQEQAVLYD) the chain is Extracellular. The chain crosses the membrane as a helical span at residues 311–331 (GILLVAFGVEAVLVFMGVKLL). Topologically, residues 332 to 338 (SKKIGER) are cytoplasmic. The helical transmembrane segment at 339-359 (AILLGGFVVVWVGFFILLPWG) threads the bilayer. Over 360–416 (NQFPKIQWEDLHNSSTPNTTFGEIIIGLWNSSREDHSEQPTGCPIEQTWCLYTPVIH) the chain is Extracellular. N-linked (GlcNAc...) asparagine glycosylation is found at Asn-372 and Asn-377. A helical transmembrane segment spans residues 417–439 (LAQFLTAAVLIGTGYPACSVMSY). At 440 to 452 (TLYSKVLGPKPQG) the chain is on the cytoplasmic side. A helical membrane pass occupies residues 453-473 (IYMGWLTTSGSAARILGPVFI). Residues 474 to 483 (SHVYTYLGPR) are Extracellular-facing. Residues 484 to 504 (WAFSLVCGIVVLTILLIGAVY) traverse the membrane as a helical segment. Residues 505-519 (KRLVAFSVRYMRIQE) lie on the Cytoplasmic side of the membrane.

It belongs to the major facilitator superfamily.

Its subcellular location is the endosome membrane. The protein resides in the lysosome membrane. It catalyses the reaction chloride(in) = chloride(out). It carries out the reaction iodide(out) = iodide(in). The enzyme catalyses fluoride(in) = fluoride(out). Its function is as follows. Outward-rectifying chloride channel involved in endolysosomal chloride homeostasis, membrane fusion and function. Conducts chloride currents up to hundreds of picoamperes. Regulates lysosomal calcium content by reducing the lysosomal membrane potential, thereby activating TRPML1 channel and further release of lysosomal calcium ions. Regulates the pH in endolysosomal compartments and may contribute to progressive acidification from endosome to lysosome. Permeable to other halides such as iodide and fluoride ions. This chain is Major facilitator superfamily domain-containing protein 8, found in Mus musculus (Mouse).